The chain runs to 285 residues: Probable endonuclease 4 (285 aa).

Zn(2+) is bound by residues H67, H107, E144, D177, H180, H214, D227, H229, and E259.

It belongs to the AP endonuclease 2 family. Zn(2+) is required as a cofactor.

The enzyme catalyses Endonucleolytic cleavage to 5'-phosphooligonucleotide end-products.. In terms of biological role, endonuclease IV plays a role in DNA repair. It cleaves phosphodiester bonds at apurinic or apyrimidinic (AP) sites, generating a 3'-hydroxyl group and a 5'-terminal sugar phosphate. The chain is Probable endonuclease 4 from Persephonella marina (strain DSM 14350 / EX-H1).